The following is a 360-amino-acid chain: UDP-N-acetylglucosamine--N-acetylmuramyl-(pentapeptide) pyrophosphoryl-undecaprenol N-acetylglucosamine transferase (360 aa).

Residues 12 to 14, N124, R161, S189, I243, and Q288 contribute to the UDP-N-acetyl-alpha-D-glucosamine site; that span reads TGG.

This sequence belongs to the glycosyltransferase 28 family. MurG subfamily.

The protein localises to the cell inner membrane. It catalyses the reaction di-trans,octa-cis-undecaprenyl diphospho-N-acetyl-alpha-D-muramoyl-L-alanyl-D-glutamyl-meso-2,6-diaminopimeloyl-D-alanyl-D-alanine + UDP-N-acetyl-alpha-D-glucosamine = di-trans,octa-cis-undecaprenyl diphospho-[N-acetyl-alpha-D-glucosaminyl-(1-&gt;4)]-N-acetyl-alpha-D-muramoyl-L-alanyl-D-glutamyl-meso-2,6-diaminopimeloyl-D-alanyl-D-alanine + UDP + H(+). It participates in cell wall biogenesis; peptidoglycan biosynthesis. In terms of biological role, cell wall formation. Catalyzes the transfer of a GlcNAc subunit on undecaprenyl-pyrophosphoryl-MurNAc-pentapeptide (lipid intermediate I) to form undecaprenyl-pyrophosphoryl-MurNAc-(pentapeptide)GlcNAc (lipid intermediate II). This Acidithiobacillus ferrooxidans (strain ATCC 23270 / DSM 14882 / CIP 104768 / NCIMB 8455) (Ferrobacillus ferrooxidans (strain ATCC 23270)) protein is UDP-N-acetylglucosamine--N-acetylmuramyl-(pentapeptide) pyrophosphoryl-undecaprenol N-acetylglucosamine transferase.